The sequence spans 196 residues: Oplophorus-luciferin 2-monooxygenase catalytic subunit (196 aa).

Residues 1–27 (MAYSTLFIIALTAVVTQASSTQKSNLT) form the signal peptide.

As to quaternary structure, heterotetramer of a catalytic 19 kDa and a non-catalytic 35 kDa subunit.

The protein resides in the secreted. The catalysed reaction is coelenterazine + O2 = coelenteramide + hnu + CO2. With respect to regulation, inhibited by micromolar Cu(2+). Its function is as follows. Catalytic subunit of oplophorus-luciferin 2-monooxygenase. Oxidoreductase that converts coelenterazine (the oplophorus luciferin) to coelenteramide under emission of blue light with a maximum at 454 nm. Is also active with bisdeoxycoelenterazine. The protein is Oplophorus-luciferin 2-monooxygenase catalytic subunit of Oplophorus gracilirostris (Luminous shrimp).